Reading from the N-terminus, the 370-residue chain is DNA replication and repair protein RecF (370 aa).

30–37 (GENAQGKT) provides a ligand contact to ATP.

It belongs to the RecF family. In terms of assembly, recruited to foci following DNA damage; probably interacts with RecO.

It is found in the cytoplasm. The protein localises to the nucleoid. Functionally, the RecF protein is involved in DNA metabolism; it is required for DNA replication and normal SOS inducibility. RecF binds preferentially to single-stranded, linear DNA. It also seems to bind ATP. Is recruited to repair centers, foci that are the site of double-strand DNA break(s) after RecN and RecO; recruitment may depend on RecO. A positive modulator of RecA. The protein is DNA replication and repair protein RecF of Bacillus subtilis (strain 168).